Reading from the N-terminus, the 150-residue chain is FAD synthase (150 aa).

ATP-binding positions include 16–17, 21–24, and aspartate 102; these read VF and HVGH.

Belongs to the archaeal FAD synthase family. In terms of assembly, homodimer. Requires a divalent metal cation as cofactor.

It carries out the reaction FMN + ATP + H(+) = FAD + diphosphate. Its pathway is cofactor biosynthesis; FAD biosynthesis; FAD from FMN: step 1/1. Catalyzes the transfer of the AMP portion of ATP to flavin mononucleotide (FMN) to produce flavin adenine dinucleotide (FAD) coenzyme. The protein is FAD synthase of Thermococcus onnurineus (strain NA1).